A 181-amino-acid polypeptide reads, in one-letter code: Large ribosomal subunit protein uL16 (181 aa).

This sequence belongs to the universal ribosomal protein uL16 family.

This chain is Large ribosomal subunit protein uL16, found in Pyrococcus horikoshii (strain ATCC 700860 / DSM 12428 / JCM 9974 / NBRC 100139 / OT-3).